Here is a 305-residue protein sequence, read N- to C-terminus: Ribonuclease H (305 aa).

The enzyme catalyses Endonucleolytic cleavage to 5'-phosphomonoester.. Functionally, plays essential roles in DNA replication by removing the RNA primers from lagging strand fragments. Exhibits 5'to 3' exonuclease activity on either RNA/DNA or DNA/DNA duplexes and endonuclease activity on either flap or fork DNA structures. The sequence is that of Ribonuclease H (rnh) from Enterobacteria phage T4 (Bacteriophage T4).